We begin with the raw amino-acid sequence, 369 residues long: Phosphoserine aminotransferase (369 aa).

An L-glutamate-binding site is contributed by R42. Residues W101, T152, D176, and Q199 each contribute to the pyridoxal 5'-phosphate site. At K200 the chain carries N6-(pyridoxal phosphate)lysine. 241-242 serves as a coordination point for pyridoxal 5'-phosphate; it reads NT.

This sequence belongs to the class-V pyridoxal-phosphate-dependent aminotransferase family. SerC subfamily. In terms of assembly, homodimer. The cofactor is pyridoxal 5'-phosphate.

The protein resides in the cytoplasm. The catalysed reaction is O-phospho-L-serine + 2-oxoglutarate = 3-phosphooxypyruvate + L-glutamate. It carries out the reaction 4-(phosphooxy)-L-threonine + 2-oxoglutarate = (R)-3-hydroxy-2-oxo-4-phosphooxybutanoate + L-glutamate. Its pathway is amino-acid biosynthesis; L-serine biosynthesis; L-serine from 3-phospho-D-glycerate: step 2/3. The protein operates within cofactor biosynthesis; pyridoxine 5'-phosphate biosynthesis; pyridoxine 5'-phosphate from D-erythrose 4-phosphate: step 3/5. In terms of biological role, catalyzes the reversible conversion of 3-phosphohydroxypyruvate to phosphoserine and of 3-hydroxy-2-oxo-4-phosphonooxybutanoate to phosphohydroxythreonine. The protein is Phosphoserine aminotransferase of Delftia acidovorans (strain DSM 14801 / SPH-1).